A 44-amino-acid chain; its full sequence is Large ribosomal subunit protein bL34 (44 aa).

Residues 21–44 (RMDTSGGRRILSARRRKGRKTISA) are disordered. Residues 31–44 (LSARRRKGRKTISA) are compositionally biased toward basic residues.

Belongs to the bacterial ribosomal protein bL34 family.

The chain is Large ribosomal subunit protein bL34 from Endomicrobium trichonymphae.